The following is a 302-amino-acid chain: Glutamate/aspartate import solute-binding protein (302 aa).

Positions 1–22 are cleaved as a signal peptide; sequence MQLRKLTTAMLVMGLSAGLAHA.

The protein belongs to the bacterial solute-binding protein 3 family. In terms of assembly, the complex is composed of two ATP-binding proteins (GltL), two transmembrane proteins (GltJ and GltK) and a solute-binding protein (GltI).

It localises to the periplasm. In terms of biological role, part of the ABC transporter complex GltIJKL involved in glutamate and aspartate uptake. Binds to both glutamate and aspartate. In Salmonella typhimurium (strain LT2 / SGSC1412 / ATCC 700720), this protein is Glutamate/aspartate import solute-binding protein (gltI).